The chain runs to 89 residues: Small ribosomal subunit protein uS15 (89 aa).

It belongs to the universal ribosomal protein uS15 family. As to quaternary structure, part of the 30S ribosomal subunit. Forms a bridge to the 50S subunit in the 70S ribosome, contacting the 23S rRNA.

In terms of biological role, one of the primary rRNA binding proteins, it binds directly to 16S rRNA where it helps nucleate assembly of the platform of the 30S subunit by binding and bridging several RNA helices of the 16S rRNA. Functionally, forms an intersubunit bridge (bridge B4) with the 23S rRNA of the 50S subunit in the ribosome. This Desulforudis audaxviator (strain MP104C) protein is Small ribosomal subunit protein uS15.